Here is a 548-residue protein sequence, read N- to C-terminus: Probable sucrose-6-phosphate hydrolase (548 aa).

Substrate-binding positions include 105-108 (LLND), Q124, 167-168 (FS), 228-229 (RD), and E283. Residue D108 is part of the active site.

This sequence belongs to the glycosyl hydrolase 32 family.

The protein resides in the cytoplasm. It catalyses the reaction Hydrolysis of terminal non-reducing beta-D-fructofuranoside residues in beta-D-fructofuranosides.. It participates in glycan biosynthesis; sucrose metabolism. Functionally, enables the bacterium to metabolize sucrose as a sole carbon source. This chain is Probable sucrose-6-phosphate hydrolase, found in Vibrio cholerae serotype O1 (strain ATCC 39315 / El Tor Inaba N16961).